The chain runs to 333 residues: L-lactate dehydrogenase B chain (333 aa).

NAD(+)-binding positions include 29-57 (GQVG…LEDK) and Arg-99. Residues Arg-106, Asn-138, and Arg-169 each coordinate substrate. Residue Asn-138 coordinates NAD(+). Catalysis depends on His-193, which acts as the Proton acceptor. A substrate-binding site is contributed by Thr-248.

Belongs to the LDH/MDH superfamily. LDH family. Homotetramer.

It is found in the cytoplasm. It carries out the reaction (S)-lactate + NAD(+) = pyruvate + NADH + H(+). It participates in fermentation; pyruvate fermentation to lactate; (S)-lactate from pyruvate: step 1/1. Interconverts simultaneously and stereospecifically pyruvate and lactate with concomitant interconversion of NADH and NAD(+). This is L-lactate dehydrogenase B chain (LDHB) from Caiman crocodilus apaporiensis (Rio Apaporis caiman).